Here is a 477-residue protein sequence, read N- to C-terminus: Glutamyl-tRNA(Gln) amidotransferase subunit A (477 aa).

Active-site charge relay system residues include Lys-76 and Ser-151. Residue Ser-175 is the Acyl-ester intermediate of the active site.

The protein belongs to the amidase family. GatA subfamily. In terms of assembly, heterotrimer of A, B and C subunits.

It catalyses the reaction L-glutamyl-tRNA(Gln) + L-glutamine + ATP + H2O = L-glutaminyl-tRNA(Gln) + L-glutamate + ADP + phosphate + H(+). Its function is as follows. Allows the formation of correctly charged Gln-tRNA(Gln) through the transamidation of misacylated Glu-tRNA(Gln) in organisms which lack glutaminyl-tRNA synthetase. The reaction takes place in the presence of glutamine and ATP through an activated gamma-phospho-Glu-tRNA(Gln). The protein is Glutamyl-tRNA(Gln) amidotransferase subunit A of Chlorobium phaeobacteroides (strain BS1).